Here is a 176-residue protein sequence, read N- to C-terminus: Putative metal-dependent hydrolase BLi00869/BLi00870/BL03027 (176 aa).

Zn(2+) contacts are provided by His-65, His-158, and His-162.

This sequence belongs to the metal hydrolase YfiT family. As to quaternary structure, homodimer. Requires Zn(2+) as cofactor.

It is found in the cytoplasm. Functionally, possible metal-dependent hydrolase. The polypeptide is Putative metal-dependent hydrolase BLi00869/BLi00870/BL03027 (Bacillus licheniformis (strain ATCC 14580 / DSM 13 / JCM 2505 / CCUG 7422 / NBRC 12200 / NCIMB 9375 / NCTC 10341 / NRRL NRS-1264 / Gibson 46)).